The sequence spans 408 residues: Phosphoglycerate kinase (408 aa).

Substrate contacts are provided by residues 24-26 (DIN), R40, 63-66 (HQGR), R120, and R160. Residues E331 and 357–360 (GGHM) contribute to the ATP site.

It belongs to the phosphoglycerate kinase family.

Its subcellular location is the cytoplasm. The enzyme catalyses (2R)-3-phosphoglycerate + ATP = (2R)-3-phospho-glyceroyl phosphate + ADP. It participates in carbohydrate degradation; glycolysis; pyruvate from D-glyceraldehyde 3-phosphate: step 2/5. This is Phosphoglycerate kinase (pgk) from Saccharolobus solfataricus (strain ATCC 35092 / DSM 1617 / JCM 11322 / P2) (Sulfolobus solfataricus).